The sequence spans 595 residues: Elongation factor 4 (595 aa).

In terms of domain architecture, tr-type G spans 1–183 (MNVRNFSIIA…AIVERIPPPP (183 aa)). Residues 13–18 (DHGKST) and 130–133 (NKID) contribute to the GTP site.

The protein belongs to the TRAFAC class translation factor GTPase superfamily. Classic translation factor GTPase family. LepA subfamily.

It localises to the cell membrane. The enzyme catalyses GTP + H2O = GDP + phosphate + H(+). Its function is as follows. Required for accurate and efficient protein synthesis under certain stress conditions. May act as a fidelity factor of the translation reaction, by catalyzing a one-codon backward translocation of tRNAs on improperly translocated ribosomes. Back-translocation proceeds from a post-translocation (POST) complex to a pre-translocation (PRE) complex, thus giving elongation factor G a second chance to translocate the tRNAs correctly. Binds to ribosomes in a GTP-dependent manner. This chain is Elongation factor 4, found in Deinococcus geothermalis (strain DSM 11300 / CIP 105573 / AG-3a).